A 709-amino-acid chain; its full sequence is DNA topoisomerase 1 (709 aa).

The Toprim domain maps to 3 to 127; the sequence is KNLVVIESPN…KCKRITFNEI (125 aa). Positions 9 and 95 each coordinate Mg(2+). One can recognise a Topo IA-type catalytic domain in the interval 143–598; sequence DLNWVESQFA…FWTNFKSDVK (456 aa). The segment at 176–181 is interaction with DNA; sequence SAGRVQ. The O-(5'-phospho-DNA)-tyrosine intermediate role is filled by Tyr-334. C4-type zinc fingers lie at residues 618–646 and 667–696; these read CPKC…FPKC and CPEC…FPNC.

It belongs to the type IA topoisomerase family. As to quaternary structure, monomer. Mg(2+) is required as a cofactor.

The catalysed reaction is ATP-independent breakage of single-stranded DNA, followed by passage and rejoining.. In terms of biological role, releases the supercoiling and torsional tension of DNA, which is introduced during the DNA replication and transcription, by transiently cleaving and rejoining one strand of the DNA duplex. Introduces a single-strand break via transesterification at a target site in duplex DNA. The scissile phosphodiester is attacked by the catalytic tyrosine of the enzyme, resulting in the formation of a DNA-(5'-phosphotyrosyl)-enzyme intermediate and the expulsion of a 3'-OH DNA strand. The free DNA strand then undergoes passage around the unbroken strand, thus removing DNA supercoils. Finally, in the religation step, the DNA 3'-OH attacks the covalent intermediate to expel the active-site tyrosine and restore the DNA phosphodiester backbone. The sequence is that of DNA topoisomerase 1 from Mycoplasma genitalium (strain ATCC 33530 / DSM 19775 / NCTC 10195 / G37) (Mycoplasmoides genitalium).